Here is a 122-residue protein sequence, read N- to C-terminus: Acyl carrier protein 1, mitochondrial (122 aa).

The N-terminal 34 residues, 1–34 (MALRNAILRHLRVPVQTLGLNQSKIGFLGTIRSF), are a transit peptide targeting the mitochondrion. A Carrier domain is found at 44–119 (EAVVDRVLDV…LAIEYVYNHP (76 aa)). An O-(pantetheine 4'-phosphoryl)serine modification is found at S79.

Belongs to the acyl carrier protein (ACP) family. Complex I is composed of at least 49 different subunits. Post-translationally, 4'-phosphopantetheine is transferred from CoA to a specific serine of the apo-ACP-like protein.

The protein localises to the mitochondrion. The protein operates within lipid metabolism; fatty acid biosynthesis. Carrier of the growing fatty acid chain in fatty acid biosynthesis. May be involved in the synthesis of short and medium chain fatty acids. Accessory and non-catalytic subunit of the mitochondrial membrane respiratory chain NADH dehydrogenase (Complex I), which functions in the transfer of electrons from NADH to the respiratory chain. The protein is Acyl carrier protein 1, mitochondrial (MTACP1) of Arabidopsis thaliana (Mouse-ear cress).